A 446-amino-acid chain; its full sequence is Exodeoxyribonuclease 7 large subunit (446 aa).

This sequence belongs to the XseA family. Heterooligomer composed of large and small subunits.

The protein localises to the cytoplasm. The enzyme catalyses Exonucleolytic cleavage in either 5'- to 3'- or 3'- to 5'-direction to yield nucleoside 5'-phosphates.. Its function is as follows. Bidirectionally degrades single-stranded DNA into large acid-insoluble oligonucleotides, which are then degraded further into small acid-soluble oligonucleotides. The polypeptide is Exodeoxyribonuclease 7 large subunit (Shewanella denitrificans (strain OS217 / ATCC BAA-1090 / DSM 15013)).